A 207-amino-acid chain; its full sequence is Urease accessory protein UreG (207 aa).

Residue 12–19 participates in GTP binding; sequence GPVGAGKT.

It belongs to the SIMIBI class G3E GTPase family. UreG subfamily. In terms of assembly, homodimer. UreD, UreF and UreG form a complex that acts as a GTP-hydrolysis-dependent molecular chaperone, activating the urease apoprotein by helping to assemble the nickel containing metallocenter of UreC. The UreE protein probably delivers the nickel.

The protein resides in the cytoplasm. Functionally, facilitates the functional incorporation of the urease nickel metallocenter. This process requires GTP hydrolysis, probably effectuated by UreG. The protein is Urease accessory protein UreG of Cereibacter sphaeroides (strain KD131 / KCTC 12085) (Rhodobacter sphaeroides).